The sequence spans 336 residues: Probable RNA methyltransferase Anae109_4379 (336 aa).

The active-site Proton acceptor is the glutamate 86. The Radical SAM core domain occupies 93–322 (FDTHHTVCLS…PIVRRYSGGQ (230 aa)). Cysteine 100 and cysteine 328 are oxidised to a cystine. [4Fe-4S] cluster-binding residues include cysteine 107, cysteine 111, and cysteine 114. Residues 154–155 (GE), serine 186, and 209–211 (SLN) each bind S-adenosyl-L-methionine. Catalysis depends on cysteine 328, which acts as the S-methylcysteine intermediate.

The protein belongs to the radical SAM superfamily. RlmN family. [4Fe-4S] cluster is required as a cofactor.

Its subcellular location is the cytoplasm. In Anaeromyxobacter sp. (strain Fw109-5), this protein is Probable RNA methyltransferase Anae109_4379.